Reading from the N-terminus, the 213-residue chain is Glycerol-3-phosphate acyltransferase (213 aa).

The next 6 helical transmembrane spans lie at 2-22, 52-74, 81-100, 112-132, 143-163, and 164-184; these read ITIVLLILAYLLGSIPSGLWI, AGMATFVIDFFKGTLATLLPIIF, PLIFGLLAVIGHTFPIFAGF, VIFGFAPIFCLYLAIIFFGAL, VTASIAAVIGVLLFPLFGFIL, and SNYDSLFITIILALASLIIIR.

This sequence belongs to the PlsY family. Probably interacts with PlsX.

It localises to the cell membrane. The catalysed reaction is an acyl phosphate + sn-glycerol 3-phosphate = a 1-acyl-sn-glycero-3-phosphate + phosphate. Its pathway is lipid metabolism; phospholipid metabolism. In terms of biological role, catalyzes the transfer of an acyl group from acyl-phosphate (acyl-PO(4)) to glycerol-3-phosphate (G3P) to form lysophosphatidic acid (LPA). This enzyme utilizes acyl-phosphate as fatty acyl donor, but not acyl-CoA or acyl-ACP. This Streptococcus pneumoniae (strain Hungary19A-6) protein is Glycerol-3-phosphate acyltransferase.